Here is a 422-residue protein sequence, read N- to C-terminus: MTKDFKISVSAALISALFSSPYAFANNDEVHFTAVQISPNADPDSHVVIFQPAAEALGGTNALAKSIHSIAVGASAEAAKQAAVAVGAGSIATGVNSVAIGPLSKALGDSAVTYGAASTAQKDGVAIGARAFTSDTGVAVGFNSKVDAKNSVAIGHSSHVAVDHDYSIAIGDRSKTDRKNSVSIGHESLNRQLTHLAAGTKDTDAVNVAQLKKEIEKTQVNANKKSAEVLGIANNYTDSKSAETLENARKEAFDLSNDALDMAKKHSNSVARTTLETAEEHTNKKSAETLARANVYADSKSSHTLQTANSYTDVTVSNSTKKAIRESNQYTDHKFRQLDNRLDKLDTRVDKGLASSAALNSLFQPYGVGKVNFTAGVGGYRSSQALAIGSGYRVNESVALKAGVAYAGSSDVMYNASFNIEW.

Positions 1 to 25 (MTKDFKISVSAALISALFSSPYAFA) are cleaved as a signal peptide. The segment at 26–330 (NNDEVHFTAV…KKAIRESNQY (305 aa)) is surface exposed passenger domain. A coiled-coil region spans residues 206-236 (VNVAQLKKEIEKTQVNANKKSAEVLGIANNY). Positions 331 to 368 (TDHKFRQLDNRLDKLDTRVDKGLASSAALNSLFQPYGV) are outer membrane translocation of the passenger domain. Beta stranded transmembrane passes span 369-379 (GKVNFTAGVGG), 383-394 (SQALAIGSGYRV), 401-407 (KAGVAYA), and 411-422 (DVMYNASFNIEW). The interval 369 to 422 (GKVNFTAGVGGYRSSQALAIGSGYRVNESVALKAGVAYAGSSDVMYNASFNIEW) is translocator domain.

It belongs to the autotransporter-2 (AT-2) (TC 1.B.40) family. Homotrimer; trimers are very stable, not disrupted by heating at 95 degrees Celsius for 10 minutes in SDS sample buffer.

It localises to the cell surface. It is found in the cell outer membrane. Functionally, collagen-binding outer membrane protein forming a fibrillar matrix on the bacterial cell surface and phagocytosis resistance. Promotes initial attachment and invasion of eukaryotic cells. Also protects the bacteria by being responsible for agglutination, serum resistance and complement inactivation. Gly-389 plays an important role in this protein; replacing it with increasingly large polar residues decreases expression levels and trimer stability. Residues larger than Ser (Thr, Asn or His) significantly decrease serume resistance and bacterial autoagglution without affecting adhesion to host cells or host cell cytokine production. This chain is Adhesin YadA, found in Yersinia enterocolitica serotype O:8 / biotype 1B (strain NCTC 13174 / 8081).